The primary structure comprises 329 residues: D-alanine--D-alanine ligase (329 aa).

Residues 121–327 form the ATP-grasp domain; that stretch reads KLWYDALDIP…FSEFLAQCVT (207 aa). 151 to 206 is a binding site for ATP; it reads AFGHWGSIFVKAARQGSSVGCYKVTTEDQIAPAIEAAFGFSEQVLVEQAVKPRELE. Residues Asp-281, Glu-294, and Asn-296 each coordinate Mg(2+).

The protein belongs to the D-alanine--D-alanine ligase family. Requires Mg(2+) as cofactor. Mn(2+) serves as cofactor.

Its subcellular location is the cytoplasm. It catalyses the reaction 2 D-alanine + ATP = D-alanyl-D-alanine + ADP + phosphate + H(+). Its pathway is cell wall biogenesis; peptidoglycan biosynthesis. In terms of biological role, cell wall formation. In Vibrio cholerae serotype O1 (strain ATCC 39541 / Classical Ogawa 395 / O395), this protein is D-alanine--D-alanine ligase.